Reading from the N-terminus, the 267-residue chain is Tryptophan synthase alpha chain (267 aa).

Residues Glu49 and Asp60 each act as proton acceptor in the active site.

It belongs to the TrpA family. Tetramer of two alpha and two beta chains.

The catalysed reaction is (1S,2R)-1-C-(indol-3-yl)glycerol 3-phosphate + L-serine = D-glyceraldehyde 3-phosphate + L-tryptophan + H2O. It participates in amino-acid biosynthesis; L-tryptophan biosynthesis; L-tryptophan from chorismate: step 5/5. The alpha subunit is responsible for the aldol cleavage of indoleglycerol phosphate to indole and glyceraldehyde 3-phosphate. In Methylococcus capsulatus (strain ATCC 33009 / NCIMB 11132 / Bath), this protein is Tryptophan synthase alpha chain.